Consider the following 499-residue polypeptide: Na(+)/H(+) antiporter NhaB (499 aa).

11 helical membrane-spanning segments follow: residues 33 to 53 (PVIF…EFIF), 66 to 86 (PGGL…HTVY), 89 to 109 (VSGN…IYFM), 128 to 148 (AILS…LDAL), 237 to 257 (FIEF…AGLI), 305 to 325 (AIVA…VGLI), 326 to 346 (GLTV…HQIG), 349 to 369 (FEEA…VGVI), 393 to 413 (MFFI…VATV), 449 to 469 (ATPN…APLI), and 477 to 497 (VWMA…MIVI).

This sequence belongs to the NhaB Na(+)/H(+) (TC 2.A.34) antiporter family.

Its subcellular location is the cell inner membrane. The catalysed reaction is 2 Na(+)(in) + 3 H(+)(out) = 2 Na(+)(out) + 3 H(+)(in). Functionally, na(+)/H(+) antiporter that extrudes sodium in exchange for external protons. In Hahella chejuensis (strain KCTC 2396), this protein is Na(+)/H(+) antiporter NhaB.